Consider the following 61-residue polypeptide: Small ribosomal subunit protein uS14 (61 aa).

4 residues coordinate Zn(2+): Cys24, Cys27, Cys40, and Cys43.

It belongs to the universal ribosomal protein uS14 family. Zinc-binding uS14 subfamily. Part of the 30S ribosomal subunit. Contacts proteins S3 and S10. The cofactor is Zn(2+).

Binds 16S rRNA, required for the assembly of 30S particles and may also be responsible for determining the conformation of the 16S rRNA at the A site. This is Small ribosomal subunit protein uS14 from Desulfitobacterium hafniense (strain Y51).